The following is a 29-amino-acid chain: MTDTQVFVALLLALVPAVLAYRLGTELYR.

A helical transmembrane segment spans residues 7–24 (FVALLLALVPAVLAYRLG).

It belongs to the PsaM family.

It is found in the cellular thylakoid membrane. This chain is Photosystem I reaction center subunit XII, found in Synechococcus sp. (strain ATCC 27144 / PCC 6301 / SAUG 1402/1) (Anacystis nidulans).